The chain runs to 427 residues: Protein king tubby 1 (427 aa).

The interval 48 to 174 (SPSNPDQIIS…ASGHNDAEGD (127 aa)) is disordered. Residues 57–86 (SSSGSPTTVTATGTGTTTTTGSVTTTPTSP) show a composition bias toward low complexity.

This sequence belongs to the TUB family.

The protein resides in the cytoplasm. It localises to the nucleus. In Culex quinquefasciatus (Southern house mosquito), this protein is Protein king tubby 1 (king-tubby1).